The primary structure comprises 548 residues: Eukaryotic translation initiation factor 3 subunit D (548 aa).

At Lys-53 the chain carries N6-acetyllysine. Phosphoserine is present on Ser-161. The interval 285–299 (DFDLLTVSETANEPP) is RNA gate. The segment at 523 to 548 (PDGTFSSDEDEEEEEEEEEEEEEEET) is disordered. Ser-528 and Ser-529 each carry phosphoserine. Residues 529–548 (SDEDEEEEEEEEEEEEEEET) are compositionally biased toward acidic residues.

This sequence belongs to the eIF-3 subunit D family. As to quaternary structure, component of the eukaryotic translation initiation factor 3 (eIF-3) complex, which is composed of 13 subunits: EIF3A, EIF3B, EIF3C, EIF3D, EIF3E, EIF3F, EIF3G, EIF3H, EIF3I, EIF3J, EIF3K, EIF3L and EIF3M. The eIF-3 complex appears to include 3 stable modules: module A is composed of EIF3A, EIF3B, EIF3G and EIF3I; module B is composed of EIF3F, EIF3H, and EIF3M; and module C is composed of EIF3C, EIF3D, EIF3E, EIF3K and EIF3L. EIF3C of module C binds EIF3B of module A and EIF3H of module B, thereby linking the three modules. EIF3J is a labile subunit that binds to the eIF-3 complex via EIF3B. The eIF-3 complex interacts with RPS6KB1 under conditions of nutrient depletion. Mitogenic stimulation leads to binding and activation of a complex composed of MTOR and RPTOR, leading to phosphorylation and release of RPS6KB1 and binding of EIF4B to eIF-3. (Microbial infection) Interacts with Norwalk virus VPg protein.

Its subcellular location is the cytoplasm. In terms of biological role, mRNA cap-binding component of the eukaryotic translation initiation factor 3 (eIF-3) complex, a complex required for several steps in the initiation of protein synthesis of a specialized repertoire of mRNAs. The eIF-3 complex associates with the 40S ribosome and facilitates the recruitment of eIF-1, eIF-1A, eIF-2:GTP:methionyl-tRNAi and eIF-5 to form the 43S pre-initiation complex (43S PIC). The eIF-3 complex stimulates mRNA recruitment to the 43S PIC and scanning of the mRNA for AUG recognition. The eIF-3 complex is also required for disassembly and recycling of post-termination ribosomal complexes and subsequently prevents premature joining of the 40S and 60S ribosomal subunits prior to initiation. The eIF-3 complex specifically targets and initiates translation of a subset of mRNAs involved in cell proliferation, including cell cycling, differentiation and apoptosis, and uses different modes of RNA stem-loop binding to exert either translational activation or repression. In the eIF-3 complex, EIF3D specifically recognizes and binds the 7-methylguanosine cap of a subset of mRNAs. Its function is as follows. (Microbial infection) In case of FCV infection, plays a role in the ribosomal termination-reinitiation event leading to the translation of VP2. This Homo sapiens (Human) protein is Eukaryotic translation initiation factor 3 subunit D.